Here is a 624-residue protein sequence, read N- to C-terminus: uncharacterized protein (624 aa).

Residues 108–138 are disordered; sequence PTAWSGMESDSTASERSLPQRTDTTSVSSQY. Phosphoserine is present on Ser-112. Over residues 115-138 the composition is skewed to polar residues; sequence ESDSTASERSLPQRTDTTSVSSQY. Phosphoserine is present on Ser-205. Disordered stretches follow at residues 217–236 and 305–329; these read LMES…PGTR and KREC…PVSE.

This is an uncharacterized protein from Rattus norvegicus (Rat).